We begin with the raw amino-acid sequence, 278 residues long: N-terminal Xaa-Pro-Lys N-methyltransferase 2 (278 aa).

Residues G123, R128, D145, 174–175 (LQ), Q190, and H195 each bind S-adenosyl-L-methionine.

Belongs to the methyltransferase superfamily. NTM1 family.

Its subcellular location is the nucleus. The enzyme catalyses N-terminal L-alanyl-L-prolyl-L-lysyl-[protein] + S-adenosyl-L-methionine = N-terminal N-methyl-L-alanyl-L-prolyl-L-lysyl-[protein] + S-adenosyl-L-homocysteine + H(+). The catalysed reaction is N-terminal L-prolyl-L-prolyl-L-lysyl-[protein] + S-adenosyl-L-methionine = N-terminal N-methyl-L-prolyl-L-prolyl-L-lysyl-[protein] + S-adenosyl-L-homocysteine + H(+). It carries out the reaction N-terminal L-seryl-L-prolyl-L-lysyl-[protein] + S-adenosyl-L-methionine = N-terminal N-methyl-L-seryl-L-prolyl-L-lysyl-[protein] + S-adenosyl-L-homocysteine + H(+). Its function is as follows. Alpha N-methyltransferase that methylates the N-terminus of target proteins containing the N-terminal motif [Ala/Pro/Ser]-Pro-Lys when the initiator Met is cleaved. Specifically catalyzes monomethylation of exposed alpha-amino group of Ala or Ser residue in the [Ala/Ser]-Pro-Lys motif and Pro in the Pro-Pro-Lys motif. Predominantly functions as a mono-methyltransferase but is also able to di-/tri-methylate the GPKRIA peptide and di-methylate the PPKRIA peptide (in vitro). May activate NTMT1 by priming its substrates for trimethylation. The chain is N-terminal Xaa-Pro-Lys N-methyltransferase 2 (ntmt2) from Danio rerio (Zebrafish).